We begin with the raw amino-acid sequence, 942 residues long: Diacylglycerol kinase theta (942 aa).

Residues 1 to 59 (MAAAAEPGARAWLGGGSPRPGSPACSPVLGSGGRARPGPGPGPGPERAGVRAPGPAAAP) form a disordered region. 2 positions are modified to phosphoserine: S22 and S26. Over residues 45-59 (PERAGVRAPGPAAAP) the composition is skewed to low complexity. 3 consecutive Phorbol-ester/DAG-type zinc fingers follow at residues 60–108 (GHSF…RIPC), 121–168 (AHCF…CSDC), and 183–234 (HHHW…APEC). The disordered stretch occupies residues 269 to 295 (EPGEGGDGADGSAAVGPGRETQATPES). A Ras-associating domain is found at 395–494 (AQEVLKIYPG…TRFYVAESRD (100 aa)). 2 consecutive short sequence motifs (LXXLL motif) follow at residues 555-559 (LYMLL) and 574-578 (LPDLL). The DAGKc domain maps to 584 to 721 (PDSCPLLVFV…MDRWTILLDA (138 aa)). Residues 908 to 942 (PKVHMLRKAKQKPRRAGTTRDARADAAPAPESDPR) form a disordered region. Positions 911–924 (HMLRKAKQKPRRAG) are enriched in basic residues. The segment covering 932–942 (DAAPAPESDPR) has biased composition (low complexity).

It belongs to the eukaryotic diacylglycerol kinase family. Interacts with RHOA (constitutively activated, GTP-bound); the interaction inhibits DGKQ. Interacts with PRKCE. Interacts with PRKCH. Interacts with PLCB1. Interacts with NR5A1; the interaction requires both LXXLL motifs in DGKQ and is required for full phosphatidic acid-mediated activation of NR5A1. In terms of processing, phosphorylated by PRKCE and PRKCH in vitro.

It localises to the cytoplasm. It is found in the cytosol. The protein localises to the cell membrane. The protein resides in the synapse. Its subcellular location is the cytoskeleton. It localises to the nucleus. It is found in the nucleus speckle. The protein localises to the nucleus matrix. It catalyses the reaction a 1,2-diacyl-sn-glycerol + ATP = a 1,2-diacyl-sn-glycero-3-phosphate + ADP + H(+). It carries out the reaction a 1-O-alkyl-sn-glycerol + ATP = a 1-O-alkyl-sn-glycero-3-phosphate + ADP + H(+). The catalysed reaction is 1-O-alkyl-2-acyl-sn-glycerol + ATP = 1-O-alkyl-2-acyl-sn-glycero-3-phosphate + ADP + H(+). The enzyme catalyses 1,2-di-(9Z-octadecenoyl)-sn-glycerol + ATP = 1,2-di-(9Z-octadecenoyl)-sn-glycero-3-phosphate + ADP + H(+). It catalyses the reaction 1-O-hexadecyl-sn-glycerol + ATP = 1-O-hexadecyl-sn-glycero-3-phosphate + ADP + H(+). It carries out the reaction 1-O-hexadecyl-2-acetyl-sn-glycerol + ATP = 1-O-hexadecyl-2-acetyl-sn-glycero-3-phosphate + ADP + H(+). The catalysed reaction is 1-octadecanoyl-2-(5Z,8Z,11Z,14Z-eicosatetraenoyl)-sn-glycerol + ATP = 1-octadecanoyl-2-(5Z,8Z,11Z,14Z-eicosatetraenoyl)-sn-glycero-3-phosphate + ADP + H(+). It functions in the pathway lipid metabolism; glycerolipid metabolism. With respect to regulation, activated by phosphatidylserine. Its function is as follows. Diacylglycerol kinase that converts diacylglycerol/DAG into phosphatidic acid/phosphatidate/PA and regulates the respective levels of these two bioactive lipids. Thereby, acts as a central switch between the signaling pathways activated by these second messengers with different cellular targets and opposite effects in numerous biological processes. Within the adrenocorticotropic hormone signaling pathway, produces phosphatidic acid which in turn activates NR5A1 and subsequent steroidogenic gene transcription. Also functions downstream of the nerve growth factor signaling pathway being specifically activated in the nucleus by the growth factor. Through its diacylglycerol activity also regulates synaptic vesicle endocytosis. The sequence is that of Diacylglycerol kinase theta from Homo sapiens (Human).